A 509-amino-acid chain; its full sequence is Lanosterol 14-alpha demethylase (509 aa).

Residues 30–50 form a helical membrane-spanning segment; that stretch reads GNLLSMLLIACAFTLSLVYLI. Residue Cys455 participates in heme binding.

It belongs to the cytochrome P450 family. It depends on heme as a cofactor. In terms of processing, ubiquitinated by MARCHF6, leading to proteasomal degradation. Ubiquitously expressed with highest levels in testis, ovary, adrenal, prostate, liver, kidney and lung.

The protein resides in the endoplasmic reticulum membrane. It is found in the microsome membrane. The catalysed reaction is a 14alpha-methyl steroid + 3 reduced [NADPH--hemoprotein reductase] + 3 O2 = a Delta(14) steroid + formate + 3 oxidized [NADPH--hemoprotein reductase] + 4 H2O + 4 H(+). It carries out the reaction lanosterol + 3 reduced [NADPH--hemoprotein reductase] + 3 O2 = 4,4-dimethyl-5alpha-cholesta-8,14,24-trien-3beta-ol + formate + 3 oxidized [NADPH--hemoprotein reductase] + 4 H2O + 4 H(+). It catalyses the reaction 24,25-dihydrolanosterol + 3 reduced [NADPH--hemoprotein reductase] + 3 O2 = 4,4-dimethyl-8,14-cholestadien-3beta-ol + formate + 3 oxidized [NADPH--hemoprotein reductase] + 4 H2O + 4 H(+). The enzyme catalyses a 14alpha-methyl steroid + reduced [NADPH--hemoprotein reductase] + O2 = a 14alpha-hydroxymethyl steroid + oxidized [NADPH--hemoprotein reductase] + H2O + H(+). The catalysed reaction is a 14alpha-hydroxymethyl steroid + reduced [NADPH--hemoprotein reductase] + O2 = a 14alpha-formyl steroid + oxidized [NADPH--hemoprotein reductase] + 2 H2O + H(+). It carries out the reaction a 14alpha-formyl steroid + reduced [NADPH--hemoprotein reductase] + O2 = a Delta(14) steroid + formate + oxidized [NADPH--hemoprotein reductase] + H2O + 2 H(+). It catalyses the reaction lanosterol + reduced [NADPH--hemoprotein reductase] + O2 = 32-hydroxylanosterol + oxidized [NADPH--hemoprotein reductase] + H2O + H(+). The enzyme catalyses 32-hydroxylanosterol + reduced [NADPH--hemoprotein reductase] + O2 = 32-oxolanosterol + oxidized [NADPH--hemoprotein reductase] + 2 H2O + H(+). The catalysed reaction is 32-oxolanosterol + reduced [NADPH--hemoprotein reductase] + O2 = 4,4-dimethyl-5alpha-cholesta-8,14,24-trien-3beta-ol + formate + oxidized [NADPH--hemoprotein reductase] + H2O + 2 H(+). It carries out the reaction 24,25-dihydrolanosterol + reduced [NADPH--hemoprotein reductase] + O2 = 32-hydroxy-24,25-dihydrolanosterol + oxidized [NADPH--hemoprotein reductase] + H2O + H(+). It catalyses the reaction 32-hydroxy-24,25-dihydrolanosterol + reduced [NADPH--hemoprotein reductase] + O2 = 32-oxo-24,25-dihydrolanosterol + oxidized [NADPH--hemoprotein reductase] + 2 H2O + H(+). The enzyme catalyses 32-oxo-24,25-dihydrolanosterol + reduced [NADPH--hemoprotein reductase] + O2 = 4,4-dimethyl-8,14-cholestadien-3beta-ol + formate + oxidized [NADPH--hemoprotein reductase] + H2O + 2 H(+). The protein operates within steroid biosynthesis; zymosterol biosynthesis; zymosterol from lanosterol: step 1/6. Inhibited by azalanstat. Inhibited by azole antifungal agents ketoconazole, itraconazole and fluconazole. Sterol 14alpha-demethylase that plays a critical role in the cholesterol biosynthesis pathway, being cholesterol the major sterol component in mammalian membranes as well as a precursor for bile acid and steroid hormone synthesis. Cytochrome P450 monooxygenase that catalyzes the three-step oxidative removal of the 14alpha-methyl group (C-32) of sterols such as lanosterol (lanosta-8,24-dien-3beta-ol) and 24,25-dihydrolanosterol (DHL) in the form of formate, and converts the sterols to 4,4-dimethyl-5alpha-cholesta-8,14,24-trien-3beta-ol and 4,4-dimethyl-8,14-cholestadien-3beta-ol, respectively, which are intermediates of cholesterol biosynthesis. Can also demethylate substrates not intrinsic to mammals, such as eburicol (24-methylene-24,25-dihydrolanosterol), but at a lower rate than DHL. This chain is Lanosterol 14-alpha demethylase, found in Homo sapiens (Human).